Here is a 255-residue protein sequence, read N- to C-terminus: EEF1A lysine methyltransferase 4 (255 aa).

S-adenosyl-L-methionine contacts are provided by W26 and Y30. Y39 is modified (phosphotyrosine). S-adenosyl-L-methionine is bound by residues W41, G66, D88–Y89, D113–V114, and K130. The Required for methyltransferase activity signature appears at E129–D134.

It belongs to the methyltransferase superfamily.

It carries out the reaction L-lysyl-[protein] + S-adenosyl-L-methionine = N(6)-methyl-L-lysyl-[protein] + S-adenosyl-L-homocysteine + H(+). The catalysed reaction is N(6)-methyl-L-lysyl-[protein] + S-adenosyl-L-methionine = N(6),N(6)-dimethyl-L-lysyl-[protein] + S-adenosyl-L-homocysteine + H(+). It catalyses the reaction N(6),N(6)-dimethyl-L-lysyl-[protein] + S-adenosyl-L-methionine = N(6),N(6),N(6)-trimethyl-L-lysyl-[protein] + S-adenosyl-L-homocysteine + H(+). In terms of biological role, protein-lysine methyltransferase that efficiently catalyzes three successive methylations on 'Lys-36' in eukaryotic translation elongation factor 1 alpha (EEF1A1 or EEF1A2). The polypeptide is EEF1A lysine methyltransferase 4 (Mus musculus (Mouse)).